The chain runs to 131 residues: MAAARKSNTRKRRVKKNIESGIAHIRSTFNNTIVTITDTHGNAISWSSAGALGFRGSRKSTPFAAQMAAETAAKGSIEHGLKTLEVTVKGPGSGREAAIRALQAAGLEVTAIRDVTPVPHNGCRPPKRRRV.

This sequence belongs to the universal ribosomal protein uS11 family. In terms of assembly, part of the 30S ribosomal subunit. Interacts with proteins S7 and S18. Binds to IF-3. Interacts with VmlR. Interacts with BrxC.

Its function is as follows. Located on the platform of the 30S subunit, it bridges several disparate RNA helices of the 16S rRNA. Forms part of the Shine-Dalgarno cleft in the 70S ribosome. The polypeptide is Small ribosomal subunit protein uS11 (Bacillus subtilis (strain 168)).